The sequence spans 393 residues: Chalcone synthase DII (393 aa).

C164 is an active-site residue.

The protein belongs to the thiolase-like superfamily. Chalcone/stilbene synthases family.

The catalysed reaction is (E)-4-coumaroyl-CoA + 3 malonyl-CoA + 3 H(+) = 2',4,4',6'-tetrahydroxychalcone + 3 CO2 + 4 CoA. It participates in secondary metabolite biosynthesis; flavonoid biosynthesis. The primary product of this enzyme is 4,2',4',6'-tetrahydroxychalcone (also termed naringenin-chalcone or chalcone) which can under specific conditions spontaneously isomerize into naringenin. This chain is Chalcone synthase DII (CHS-DII), found in Ipomoea batatas (Sweet potato).